The primary structure comprises 107 residues: Thiosulfate sulfurtransferase GlpE (107 aa).

Residues Lys16–Ala104 enclose the Rhodanese domain. Cys64 serves as the catalytic Cysteine persulfide intermediate.

Belongs to the GlpE family.

The protein localises to the cytoplasm. The enzyme catalyses thiosulfate + hydrogen cyanide = thiocyanate + sulfite + 2 H(+). It carries out the reaction thiosulfate + [thioredoxin]-dithiol = [thioredoxin]-disulfide + hydrogen sulfide + sulfite + 2 H(+). Functionally, transferase that catalyzes the transfer of sulfur from thiosulfate to thiophilic acceptors such as cyanide or dithiols. May function in a CysM-independent thiosulfate assimilation pathway by catalyzing the conversion of thiosulfate to sulfite, which can then be used for L-cysteine biosynthesis. This is Thiosulfate sulfurtransferase GlpE from Coxiella burnetii (strain CbuK_Q154) (Coxiella burnetii (strain Q154)).